Reading from the N-terminus, the 441-residue chain is MSEMTPREIVHELDSHIIGQQKAKRSVAIALRNRWRRMQLAADLRQEVTPKNILMIGPTGVGKTEIARRLARLAKAPFIKVEATKFTEVGYVGKEVEQIIRDLTDSAIKLTREEQIKKCKFRAEEAAEERILDALLPKPKEDWDSEKSDGSATRQIFRKKLREGQLDDKEIEIDVSAPQAGIEIMSPPGMEEMTNQLQSMFQNMGPGASKRRKMPIKEAYKLLIEEEASKLINQEDLKEQAIELVEQHGIVFLDEIDKICKRGESSGPDVSREGVQRDLLPLVEGCTVNTKHGMVKTDHILFIASGAFQMSKPSDLIPELQGRLPIRVELDALSAGDFKRILTEPHASLTEQYIALMGTEGVTIEFTEDGIDSIAEAAWQVNERTENIGARRLHTVMERLMEELSFEASDKSGSVTVIDAAYVKASLDNLVQDEDLSRYIL.

ATP is bound by residues I18, 60 to 65 (GVGKTE), D254, E319, and R391.

The protein belongs to the ClpX chaperone family. HslU subfamily. In terms of assembly, a double ring-shaped homohexamer of HslV is capped on each side by a ring-shaped HslU homohexamer. The assembly of the HslU/HslV complex is dependent on binding of ATP.

The protein localises to the cytoplasm. Functionally, ATPase subunit of a proteasome-like degradation complex; this subunit has chaperone activity. The binding of ATP and its subsequent hydrolysis by HslU are essential for unfolding of protein substrates subsequently hydrolyzed by HslV. HslU recognizes the N-terminal part of its protein substrates and unfolds these before they are guided to HslV for hydrolysis. This Shewanella halifaxensis (strain HAW-EB4) protein is ATP-dependent protease ATPase subunit HslU.